The following is a 514-amino-acid chain: Glutamyl-tRNA(Gln) amidotransferase subunit B, mitochondrial (514 aa).

It belongs to the GatB/GatE family. GatB subfamily. As to quaternary structure, subunit of the heterotrimeric GatCAB amidotransferase (AdT) complex, composed of A, B and C subunits.

The protein localises to the mitochondrion. It catalyses the reaction L-glutamyl-tRNA(Gln) + L-glutamine + ATP + H2O = L-glutaminyl-tRNA(Gln) + L-glutamate + ADP + phosphate + H(+). In terms of biological role, allows the formation of correctly charged Gln-tRNA(Gln) through the transamidation of misacylated Glu-tRNA(Gln) in the mitochondria. The reaction takes place in the presence of glutamine and ATP through an activated gamma-phospho-Glu-tRNA(Gln). This chain is Glutamyl-tRNA(Gln) amidotransferase subunit B, mitochondrial, found in Naegleria gruberi (Amoeba).